The following is a 475-amino-acid chain: UDP-N-acetylmuramate--L-alanine ligase (475 aa).

An ATP-binding site is contributed by 125-131; the sequence is GTHGKTT.

It belongs to the MurCDEF family.

Its subcellular location is the cytoplasm. The catalysed reaction is UDP-N-acetyl-alpha-D-muramate + L-alanine + ATP = UDP-N-acetyl-alpha-D-muramoyl-L-alanine + ADP + phosphate + H(+). Its pathway is cell wall biogenesis; peptidoglycan biosynthesis. Functionally, cell wall formation. This chain is UDP-N-acetylmuramate--L-alanine ligase, found in Glaesserella parasuis serovar 5 (strain SH0165) (Haemophilus parasuis).